Here is a 971-residue protein sequence, read N- to C-terminus: Reversion-inducing cysteine-rich protein with Kazal motifs (971 aa).

The N-terminal stretch at 1 to 22 (MATVRASLRGALLLLLAVAGVA) is a signal peptide. A Knot 1 repeat occupies 37 to 84 (CCNHSKDNQMCRDVCEQIFSSKSESRLKHLLQRAPDYCPETMVEIWNC). The segment at 37-338 (CCNHSKDNQM…NPVEVSMLTC (302 aa)) is 5 X Knot repeats. N-linked (GlcNAc...) asparagine glycosylation is found at N39 and N86. 2 Knot repeats span residues 104–141 (CCEL…LFSC) and 151–197 (CCSY…LIHC). An N-linked (GlcNAc...) asparagine glycan is attached at N200. 2 Knot repeats span residues 216-263 (CCDR…LWQC) and 292-338 (CCSK…MLTC). 2 N-linked (GlcNAc...) asparagine glycosylation sites follow: N297 and N352. Kazal-like domains lie at 627-673 (TFTG…SCMS), 698-752 (TFDK…PCQP), and 753-789 (FCRA…DCQA). 6 cysteine pairs are disulfide-bonded: C633-C658, C635-C654, C643-C671, C716-C735, C724-C750, and C761-C787. S942 is lipidated: GPI-anchor amidated serine. A propeptide spans 943-971 (AGVRARPSCHSLLLPLSLGLALHLLWTYN) (removed in mature form).

This sequence belongs to the RECK family. Interacts (via knot repeats) with WNT7A (via disordered linker region); the interaction is direct. Interacts (via knot repeats) with WNT7B (via disordered linker region); the interaction is direct. Interacts with ADGRA2; the interaction is direct. Interacts with MMP9. N-glycosylated. Expressed in various tissues and untransformed cells. It is undetectable in tumor-derived cell lines and oncogenically transformed cells.

The protein localises to the cell membrane. Its function is as follows. Functions together with ADGRA2 to enable brain endothelial cells to selectively respond to Wnt7 signals (WNT7A or WNT7B). Plays a key role in Wnt7-specific responses: required for central nervous system (CNS) angiogenesis and blood-brain barrier regulation. Acts as a Wnt7-specific coactivator of canonical Wnt signaling by decoding Wnt ligands: acts by interacting specifically with the disordered linker region of Wnt7, thereby conferring ligand selectivity for Wnt7. ADGRA2 is then required to deliver RECK-bound Wnt7 to frizzled by assembling a higher-order RECK-ADGRA2-Fzd-LRP5-LRP6 complex. Also acts as a serine protease inhibitor: negatively regulates matrix metalloproteinase-9 (MMP9) by suppressing MMP9 secretion and by direct inhibition of its enzymatic activity. Also inhibits metalloproteinase activity of MMP2 and MMP14 (MT1-MMP). In Homo sapiens (Human), this protein is Reversion-inducing cysteine-rich protein with Kazal motifs.